A 175-amino-acid polypeptide reads, in one-letter code: Adenine phosphoribosyltransferase (175 aa).

It belongs to the purine/pyrimidine phosphoribosyltransferase family. As to quaternary structure, homodimer.

It is found in the cytoplasm. It carries out the reaction AMP + diphosphate = 5-phospho-alpha-D-ribose 1-diphosphate + adenine. The protein operates within purine metabolism; AMP biosynthesis via salvage pathway; AMP from adenine: step 1/1. Functionally, catalyzes a salvage reaction resulting in the formation of AMP, that is energically less costly than de novo synthesis. The polypeptide is Adenine phosphoribosyltransferase (Lacticaseibacillus paracasei (strain ATCC 334 / BCRC 17002 / CCUG 31169 / CIP 107868 / KCTC 3260 / NRRL B-441) (Lactobacillus paracasei)).